The following is a 209-amino-acid chain: Uracil phosphoribosyltransferase (209 aa).

5-phospho-alpha-D-ribose 1-diphosphate-binding positions include arginine 79, arginine 104, and aspartate 131–serine 139. Residues isoleucine 194 and glycine 199 to alanine 201 each bind uracil. Residue aspartate 200 participates in 5-phospho-alpha-D-ribose 1-diphosphate binding.

Belongs to the UPRTase family. Mg(2+) is required as a cofactor.

The enzyme catalyses UMP + diphosphate = 5-phospho-alpha-D-ribose 1-diphosphate + uracil. Its pathway is pyrimidine metabolism; UMP biosynthesis via salvage pathway; UMP from uracil: step 1/1. With respect to regulation, allosterically activated by GTP. Catalyzes the conversion of uracil and 5-phospho-alpha-D-ribose 1-diphosphate (PRPP) to UMP and diphosphate. The sequence is that of Uracil phosphoribosyltransferase from Lactiplantibacillus plantarum (strain ATCC BAA-793 / NCIMB 8826 / WCFS1) (Lactobacillus plantarum).